The following is a 393-amino-acid chain: Digeranylgeranylglycerophospholipid reductase (393 aa).

The FAD site is built by Ala13, Asp32, Cys43, Ala44, Gly46, Arg95, Val119, Asp274, and Gly286. A 2,3-bis-O-(geranylgeranyl)-sn-glycerol 1-phospholipid is bound by residues Lys327 and Gly363.

This sequence belongs to the geranylgeranyl reductase family. DGGGPL reductase subfamily. It depends on FAD as a cofactor.

The enzyme catalyses a 2,3-bis-O-phytanyl-sn-glycerol 1-phospholipid + 8 A = a 2,3-bis-O-(geranylgeranyl)-sn-glycerol 1-phospholipid + 8 AH2. It carries out the reaction 2,3-bis-O-(phytanyl)-sn-glycerol 1-phosphate + 8 A = 2,3-bis-O-(geranylgeranyl)-sn-glycerol 1-phosphate + 8 AH2. It catalyses the reaction CDP-2,3-bis-O-(geranylgeranyl)-sn-glycerol + 8 AH2 = CDP-2,3-bis-O-(phytanyl)-sn-glycerol + 8 A. The catalysed reaction is archaetidylserine + 8 AH2 = 2,3-bis-O-phytanyl-sn-glycero-3-phospho-L-serine + 8 A. The protein operates within membrane lipid metabolism; glycerophospholipid metabolism. Its function is as follows. Is involved in the reduction of 2,3-digeranylgeranylglycerophospholipids (unsaturated archaeols) into 2,3-diphytanylglycerophospholipids (saturated archaeols) in the biosynthesis of archaeal membrane lipids. Catalyzes the formation of archaetidic acid (2,3-di-O-phytanyl-sn-glyceryl phosphate) from 2,3-di-O-geranylgeranylglyceryl phosphate (DGGGP) via the hydrogenation of each double bond of the isoprenoid chains. Is also probably able to reduce double bonds of geranyl groups in CDP-2,3-bis-O-(geranylgeranyl)-sn-glycerol and archaetidylserine, thus acting at various stages in the biosynthesis of archaeal membrane lipids. The polypeptide is Digeranylgeranylglycerophospholipid reductase (Pyrococcus furiosus (strain ATCC 43587 / DSM 3638 / JCM 8422 / Vc1)).